The following is a 350-amino-acid chain: MGLYQLLKPALFQLDAETAHGLGHRVLDGIQGTPLERIVADYCTVVDPRLRVDAFGQTFPNPVGVAAGFDKNAEIPDALGALGFGHVEVGGVTAEPQAGNPRPRMFRLAEDRALINRMGFNNDGADIVGERLAATDCRVPVGVNIGKSKSAANDDAEADYQYTYERVADGGDYFVVNVSSPNTPGLRELQSRDRLESILGTLQDDGASPLLVKLSPDLTDAAIEDAIEVVEDLGLDGIIATNTTTKRPASLHSDAADEEGGLSGAPITDESTDIVRFIAKRTDKPIVGVGGIDDAESAYEKIRNGASVVQLYTGLVYEGPTIARDINRGLLKLLERDGFASVEDAVGVDI.

Residues 67-71 (AGFDK) and Gly-91 each bind FMN. Position 71 (Lys-71) interacts with substrate. 116-120 (NRMGF) contacts substrate. FMN is bound by residues Asn-144 and Asn-177. Asn-177 serves as a coordination point for substrate. Catalysis depends on Ser-180, which acts as the Nucleophile. Asn-182 is a substrate binding site. 2 residues coordinate FMN: Lys-213 and Thr-241. 242 to 243 (NT) is a substrate binding site. The disordered stretch occupies residues 249–268 (ASLHSDAADEEGGLSGAPIT). FMN contacts are provided by residues Gly-264, Gly-291, and 312-313 (YT).

This sequence belongs to the dihydroorotate dehydrogenase family. Type 2 subfamily. Monomer. Requires FMN as cofactor.

Its subcellular location is the cell membrane. It carries out the reaction (S)-dihydroorotate + a quinone = orotate + a quinol. It participates in pyrimidine metabolism; UMP biosynthesis via de novo pathway; orotate from (S)-dihydroorotate (quinone route): step 1/1. In terms of biological role, catalyzes the conversion of dihydroorotate to orotate with quinone as electron acceptor. In Natronomonas pharaonis (strain ATCC 35678 / DSM 2160 / CIP 103997 / JCM 8858 / NBRC 14720 / NCIMB 2260 / Gabara) (Halobacterium pharaonis), this protein is Dihydroorotate dehydrogenase (quinone).